The following is a 398-amino-acid chain: Phosphoglycerate kinase (398 aa).

Substrate contacts are provided by residues 23–25 (DLN), R38, 61–64 (HFGR), R119, and R152. ATP-binding positions include K202, E324, and 354-357 (GGDT).

This sequence belongs to the phosphoglycerate kinase family. As to quaternary structure, monomer.

The protein localises to the cytoplasm. The catalysed reaction is (2R)-3-phosphoglycerate + ATP = (2R)-3-phospho-glyceroyl phosphate + ADP. Its pathway is carbohydrate degradation; glycolysis; pyruvate from D-glyceraldehyde 3-phosphate: step 2/5. The protein is Phosphoglycerate kinase of Bradyrhizobium diazoefficiens (strain JCM 10833 / BCRC 13528 / IAM 13628 / NBRC 14792 / USDA 110).